The sequence spans 1038 residues: Ras GTPase-activating protein 1 (1038 aa).

M1 is modified (N-acetylmethionine). Positions 1 to 16 are enriched in low complexity; sequence MMAAEAGSEEGGPATA. 2 disordered regions span residues 1 to 24 and 117 to 152; these read MMAA…AAAT and ETLG…SLDG. The segment covering 124 to 135 has biased composition (pro residues); that stretch reads GFPPLPPPPLLP. In terms of domain architecture, SH2 1 spans 172 to 263; it reads WYHGKLDRTI…LKGEKLLYPV (92 aa). In terms of domain architecture, SH3 spans 270–332; that stretch reads EDRRRVRAIL…VEDLVEEVGR (63 aa). One can recognise an SH2 2 domain in the interval 342–432; that stretch reads WFHGKISKQE…VEGYYLKEPV (91 aa). The PH domain occupies 465-568; that stretch reads NIVKKGYLLK…WMKGLQAFCS (104 aa). The C2 domain maps to 568–681; the sequence is SLRKSSPGTS…QKGHATDEWF (114 aa). Y606 carries the post-translational modification Phosphotyrosine. The Ras-GAP domain maps to 755-965; that stretch reads KLESLLLCTL…HRMIMFLDEL (211 aa). Residue S822 is modified to Phosphoserine.

As to quaternary structure, interacts with SQSTM1. Interacts with SPSB1; the interaction does not promote degradation. Interacts with CAV2 (tyrosine phosphorylated form). Directly interacts with NCK1. Interacts with PDGFRB (tyrosine phosphorylated). Interacts (via SH2 domain) with the 'Tyr-9' phosphorylated form of PDPK1. Interacts with tyrosine-phosphorylated EPHB4. Post-translationally, phosphorylated by SRC and LCK. The phosphorylation SRC inhibits its ability to stimulate the Ras-GTPase activity, whereas phosphorylation by LCK does not display any effect on stimulation activity.

The protein localises to the cytoplasm. Functionally, inhibitory regulator of the Ras-cyclic AMP pathway. Stimulates the GTPase of normal but not oncogenic Ras p21. This is Ras GTPase-activating protein 1 (Rasa1) from Rattus norvegicus (Rat).